The following is a 473-amino-acid chain: Photosystem II CP43 reaction center protein (473 aa).

A propeptide spanning residues 1–14 is cleaved from the precursor; the sequence is MKTLYSLRRYYPVE. The residue at position 15 (Thr15) is an N-acetylthreonine. Phosphothreonine is present on Thr15. 5 consecutive transmembrane segments (helical) span residues 69–93, 134–155, 178–200, 255–275, and 291–312; these read LFEVAHFVPEKPMYEQGLILLPHLA, LIGPETLEESFPFFGYVWKDKN, KASFFGGVYDTWAPGGGDVREIT, KPFAWARRALVWSGEAYLSYS, and WFNNTAYPSEFYGPTGPEASQA. A [CaMn4O5] cluster-binding site is contributed by Glu367. Residues 447-471 form a helical membrane-spanning segment; the sequence is RARAAAAGFEKGIDRDSEPVLSMTP.

The protein belongs to the PsbB/PsbC family. PsbC subfamily. As to quaternary structure, PSII is composed of 1 copy each of membrane proteins PsbA, PsbB, PsbC, PsbD, PsbE, PsbF, PsbH, PsbI, PsbJ, PsbK, PsbL, PsbM, PsbT, PsbX, PsbY, PsbZ, Psb30/Ycf12, at least 3 peripheral proteins of the oxygen-evolving complex and a large number of cofactors. It forms dimeric complexes. Requires Binds multiple chlorophylls and provides some of the ligands for the Ca-4Mn-5O cluster of the oxygen-evolving complex. It may also provide a ligand for a Cl- that is required for oxygen evolution. PSII binds additional chlorophylls, carotenoids and specific lipids. as cofactor.

The protein localises to the plastid. It localises to the chloroplast thylakoid membrane. Functionally, one of the components of the core complex of photosystem II (PSII). It binds chlorophyll and helps catalyze the primary light-induced photochemical processes of PSII. PSII is a light-driven water:plastoquinone oxidoreductase, using light energy to abstract electrons from H(2)O, generating O(2) and a proton gradient subsequently used for ATP formation. This is Photosystem II CP43 reaction center protein from Anthoceros angustus (Hornwort).